The sequence spans 55 residues: Trypsin inhibitor ClTI-1 (55 aa).

A Kazal-like domain is found at 1–55 (SIPPACDKYSRLPGCPRDYSPVCGTDGKTYPNECVLCLSNSEENKNVQIYKSGMC). 3 disulfides stabilise this stretch: C6–C37, C15–C34, and C23–C55.

Its subcellular location is the secreted. In terms of biological role, inhibits trypsin and plasmin. This Gallus gallus (Chicken) protein is Trypsin inhibitor ClTI-1.